The primary structure comprises 428 residues: Dihydroorotase (428 aa).

Zn(2+) is bound by residues His-59 and His-61. Substrate-binding positions include His-61–Arg-63 and Asn-93. The Zn(2+) site is built by Asp-151, His-178, and His-231. Asn-277 provides a ligand contact to substrate. Asp-304 provides a ligand contact to Zn(2+). Asp-304 is an active-site residue. Substrate contacts are provided by residues His-308 and Phe-322–Gly-323.

This sequence belongs to the metallo-dependent hydrolases superfamily. DHOase family. Class I DHOase subfamily. Zn(2+) is required as a cofactor.

The catalysed reaction is (S)-dihydroorotate + H2O = N-carbamoyl-L-aspartate + H(+). Its pathway is pyrimidine metabolism; UMP biosynthesis via de novo pathway; (S)-dihydroorotate from bicarbonate: step 3/3. Its function is as follows. Catalyzes the reversible cyclization of carbamoyl aspartate to dihydroorotate. In Bacillus cereus (strain AH187), this protein is Dihydroorotase.